The primary structure comprises 330 residues: tRNA-modifying protein YgfZ (330 aa).

Residues Trp-28 and Trp-190 each coordinate folate.

The protein belongs to the tRNA-modifying YgfZ family.

The protein resides in the cytoplasm. Functionally, folate-binding protein involved in regulating the level of ATP-DnaA and in the modification of some tRNAs. It is probably a key factor in regulatory networks that act via tRNA modification, such as initiation of chromosomal replication. The protein is tRNA-modifying protein YgfZ of Yersinia pestis bv. Antiqua (strain Antiqua).